We begin with the raw amino-acid sequence, 230 residues long: Flagellar L-ring protein (230 aa).

Residues 1–22 form the signal peptide; that stretch reads MSPISNFARIALACTVAALLGG. Cys23 carries the N-palmitoyl cysteine lipid modification. A lipid anchor (S-diacylglycerol cysteine) is attached at Cys23.

Belongs to the FlgH family. As to quaternary structure, the basal body constitutes a major portion of the flagellar organelle and consists of four rings (L,P,S, and M) mounted on a central rod.

Its subcellular location is the cell outer membrane. It localises to the bacterial flagellum basal body. Its function is as follows. Assembles around the rod to form the L-ring and probably protects the motor/basal body from shearing forces during rotation. This is Flagellar L-ring protein from Stenotrophomonas maltophilia (strain K279a).